We begin with the raw amino-acid sequence, 378 residues long: tRNA-specific 2-thiouridylase MnmA (378 aa).

Residues 14–21 (AMSGGVDS) and leucine 40 contribute to the ATP site. Cysteine 109 serves as the catalytic Nucleophile. Cysteines 109 and 208 form a disulfide. Residue glycine 133 coordinates ATP. The interaction with tRNA stretch occupies residues 156–158 (KDQ). Cysteine 208 acts as the Cysteine persulfide intermediate in catalysis.

The protein belongs to the MnmA/TRMU family.

It is found in the cytoplasm. The catalysed reaction is S-sulfanyl-L-cysteinyl-[protein] + uridine(34) in tRNA + AH2 + ATP = 2-thiouridine(34) in tRNA + L-cysteinyl-[protein] + A + AMP + diphosphate + H(+). In terms of biological role, catalyzes the 2-thiolation of uridine at the wobble position (U34) of tRNA, leading to the formation of s(2)U34. The sequence is that of tRNA-specific 2-thiouridylase MnmA from Streptomyces griseus subsp. griseus (strain JCM 4626 / CBS 651.72 / NBRC 13350 / KCC S-0626 / ISP 5235).